We begin with the raw amino-acid sequence, 434 residues long: Histidinol dehydrogenase (434 aa).

The NAD(+) site is built by Y130, Q188, and N211. 3 residues coordinate substrate: S237, Q259, and H262. Zn(2+) contacts are provided by Q259 and H262. Active-site proton acceptor residues include E326 and H327. Substrate contacts are provided by H327, D360, E414, and H419. A Zn(2+)-binding site is contributed by D360. H419 lines the Zn(2+) pocket.

This sequence belongs to the histidinol dehydrogenase family. In terms of assembly, homodimer. Requires Zn(2+) as cofactor.

It catalyses the reaction L-histidinol + 2 NAD(+) + H2O = L-histidine + 2 NADH + 3 H(+). The protein operates within amino-acid biosynthesis; L-histidine biosynthesis; L-histidine from 5-phospho-alpha-D-ribose 1-diphosphate: step 9/9. Functionally, catalyzes the sequential NAD-dependent oxidations of L-histidinol to L-histidinaldehyde and then to L-histidine. The polypeptide is Histidinol dehydrogenase (Shigella boydii serotype 4 (strain Sb227)).